The following is a 211-amino-acid chain: Claudin-13 (211 aa).

Topologically, residues 1-8 (MVVSKQEA) are cytoplasmic. A helical membrane pass occupies residues 9-29 (ISFSVTSLGWVGAIVSCVLPV). Over 30-80 (WRVTFPDDETDPDATIWEGLWHICQVRENRWIQCTLYDTRILVAQDIKVSR) the chain is Extracellular. The helical transmembrane segment at 81–101 (VFMVICTIGTWLGLLLCVLGD) threads the bilayer. Over 102–118 (WRINCFMNFTIEENLLK) the chain is Cytoplasmic. Residues 119-139 (VAGGMFLSVGLLMLVPLSWVT) traverse the membrane as a helical segment. Topologically, residues 140–165 (HNIIHGFFNPLLGFSKKVQMGSSLSL) are extracellular. Residues 166 to 186 (AWTSSLLLLLGGILLCVNIPV) form a helical membrane-spanning segment. At 187-211 (CRDFPRCIETPSARPSGANNDTLDV) the chain is on the cytoplasmic side.

It belongs to the claudin family.

Its subcellular location is the cell junction. The protein localises to the tight junction. It is found in the cell membrane. Plays a major role in tight junction-specific obliteration of the intercellular space, through calcium-independent cell-adhesion activity. The chain is Claudin-13 (Cldn13) from Mus musculus (Mouse).